The following is a 411-amino-acid chain: 2,3-bisphosphoglycerate-independent phosphoglycerate mutase (411 aa).

Belongs to the BPG-independent phosphoglycerate mutase family. A-PGAM subfamily.

It carries out the reaction (2R)-2-phosphoglycerate = (2R)-3-phosphoglycerate. The protein operates within carbohydrate degradation; glycolysis; pyruvate from D-glyceraldehyde 3-phosphate: step 3/5. Its function is as follows. Catalyzes the interconversion of 2-phosphoglycerate and 3-phosphoglycerate. The protein is 2,3-bisphosphoglycerate-independent phosphoglycerate mutase of Pyrobaculum calidifontis (strain DSM 21063 / JCM 11548 / VA1).